The sequence spans 198 residues: CASP-like protein 1U1 (198 aa).

Over 1–30 (MSDTPVVVIPRKGYVDGHHGYHHSYHSGLN) the chain is Cytoplasmic. Residues 31–51 (LLLRLLQAFATAAAVIVMLLA) traverse the membrane as a helical segment. The Extracellular portion of the chain corresponds to 52–73 (TQTEFTRYGEVRGRWRDYPAYK). A helical transmembrane segment spans residues 74 to 94 (WFIIANAVVFVYALLATLVAC). The Cytoplasmic segment spans residues 95–117 (CALIARRGPLSYSPSAWLTFLLD). The chain crosses the membrane as a helical span at residues 118 to 138 (FVAASALMSAASAALAVALIA). The Extracellular portion of the chain corresponds to 139–165 (RNGQNLQGQHYWPTFCNYVTRFCDYAQ). Residues 166–186 (GAIIASFCGFGLLALSTLLAA) form a helical membrane-spanning segment. The Cytoplasmic portion of the chain corresponds to 187-198 (SALHHLAWHRLH).

It belongs to the Casparian strip membrane proteins (CASP) family. As to quaternary structure, homodimer and heterodimers.

It is found in the cell membrane. In Physcomitrium patens (Spreading-leaved earth moss), this protein is CASP-like protein 1U1.